A 194-amino-acid polypeptide reads, in one-letter code: Large ribosomal subunit protein uL6m (194 aa).

The protein belongs to the universal ribosomal protein uL6 family.

The protein resides in the mitochondrion. This chain is Large ribosomal subunit protein uL6m (RPL6), found in Prototheca wickerhamii.